Consider the following 64-residue polypeptide: Disintegrin VB7A (64 aa).

Residues 1–64 (NSGNPCCDPV…SDCPRNPYKD (64 aa)) enclose the Disintegrin domain. 4 cysteine pairs are disulfide-bonded: Cys-6–Cys-29, Cys-20–Cys-26, Cys-25–Cys-50, and Cys-38–Cys-57. A Cell attachment site motif is present at residues 42–44 (RGD).

It belongs to the disintegrin family. Dimeric disintegrin subfamily. As to quaternary structure, heterodimer with VB7B; disulfide-linked. As to expression, expressed by the venom gland.

It localises to the secreted. Functionally, poor inhibitor of platelet aggregation. The disintegrin inhibits the adhesion of cells expressing the RGD-dependent integrin alpha-5/beta-1 (ITGA5/ITGB1) to immobilized fibronectin. Inhibition on alpha-2b/beta-3 (ITGA2B/ITGB3) is low. This chain is Disintegrin VB7A, found in Vipera berus berus (Common viper).